The sequence spans 485 residues: Hexokinase-1 (485 aa).

Positions 21–468 (KELMDEIHQL…SGAGAAVIAA (448 aa)) constitute a Hexokinase domain. Residues 75–209 (TGKESGNYLA…ELPIEIVALI (135 aa)) form a hexokinase small subdomain region. ATP contacts are provided by residues 86–91 (DLGGTN) and Lys-111. Substrate contacts are provided by residues Ser-158, 175–176 (TK), 210–211 (ND), and Asn-237. A hexokinase large subdomain region spans residues 210–457 (NDTVGTLIAS…DPITIVPAED (248 aa)). Ser-245 carries the post-translational modification Phosphoserine. Glu-269 contacts substrate. Ser-272 is subject to Phosphoserine. Glu-302 serves as a coordination point for substrate. ATP contacts are provided by residues 307–308 (GY), 344–348 (TSYPA), and 419–423 (SVYNK).

The protein belongs to the hexokinase family. In terms of assembly, homodimer.

It catalyses the reaction a D-hexose + ATP = a D-hexose 6-phosphate + ADP + H(+). The enzyme catalyses D-fructose + ATP = D-fructose 6-phosphate + ADP + H(+). It carries out the reaction D-glucose + ATP = D-glucose 6-phosphate + ADP + H(+). The protein operates within carbohydrate metabolism; hexose metabolism. Its pathway is carbohydrate degradation; glycolysis; D-glyceraldehyde 3-phosphate and glycerone phosphate from D-glucose: step 1/4. Its activity is regulated as follows. Subject to allosteric control. Substrate inhibition by ATP. In terms of biological role, catalyzes the phosphorylation of hexose, such as D-glucose and D-fructose, to hexose 6-phosphate (D-glucose 6-phosphate and D-fructose 6-phosphate, respectively). Mediates the initial step of glycolysis by catalyzing phosphorylation of D-glucose to D-glucose 6-phosphate. This is Hexokinase-1 (HXK1) from Saccharomyces cerevisiae (strain ATCC 204508 / S288c) (Baker's yeast).